The primary structure comprises 252 residues: 7-carboxy-7-deazaguanine synthase (252 aa).

Substrate contacts are provided by residues 22-24 and R37; that span reads LQG. Residues 28 to 251 enclose the Radical SAM core domain; it reads FVGEPQAFVR…QVHKLVDFIP (224 aa). The [4Fe-4S] cluster site is built by C41, C45, and C48. T102 is a binding site for substrate. G104 contacts S-adenosyl-L-methionine.

It belongs to the radical SAM superfamily. 7-carboxy-7-deazaguanine synthase family. Homodimer. The cofactor is [4Fe-4S] cluster. It depends on S-adenosyl-L-methionine as a cofactor. Requires Mg(2+) as cofactor.

It catalyses the reaction 6-carboxy-5,6,7,8-tetrahydropterin + H(+) = 7-carboxy-7-deazaguanine + NH4(+). The protein operates within purine metabolism; 7-cyano-7-deazaguanine biosynthesis. Its function is as follows. Catalyzes the complex heterocyclic radical-mediated conversion of 6-carboxy-5,6,7,8-tetrahydropterin (CPH4) to 7-carboxy-7-deazaguanine (CDG), a step common to the biosynthetic pathways of all 7-deazapurine-containing compounds. This is 7-carboxy-7-deazaguanine synthase from Methanopyrus kandleri (strain AV19 / DSM 6324 / JCM 9639 / NBRC 100938).